Reading from the N-terminus, the 488-residue chain is MSTLYIAGAWQAGQGELFHSLNPVSQQTLWSGQAATPEQVDYAVQAARQAFPGWAQRSLDQRIAVLEAFAASLKGRADELAHCIGEETGKPLWESATEVTSMVNKIAISVQSYRERTGEKSGPLGDATAVLRHKPHGVVAVFGPYNFPGHLPNGHIVPALLAGNTVVFKPSELTPKVAELTVKCWIEAGLPAGVLNLLQGGRETGIALAANPGIDGLFFTGSSRTGDALHQQFAGRPDKILALEMGGNNPLIVDQVQDIEAAVYNIIQSAFISAGQRCTCARRLLVPEGDWGDALLARLVAVSATIEVGAFDQQPSPFMGSVISLEAAHALLDAQRNLLANGAVTLLEMRQPQAGAALLTPGIINVSAVAERPDEELFGPLLQVIRYAGFDAAIAEANATRYGLAAGLLSDSEARYQQFWLHSRAGIVNWNKQLTGAASSAPFGGVGASGNHRASAYYAADYCAYPVASLEAGSLTLPSTLTPGIRLS.

Residue 221 to 226 (GSSRTG) participates in NAD(+) binding. Active-site residues include E244 and C278.

The protein belongs to the aldehyde dehydrogenase family. AstD subfamily.

It carries out the reaction N-succinyl-L-glutamate 5-semialdehyde + NAD(+) + H2O = N-succinyl-L-glutamate + NADH + 2 H(+). The protein operates within amino-acid degradation; L-arginine degradation via AST pathway; L-glutamate and succinate from L-arginine: step 4/5. Catalyzes the NAD-dependent reduction of succinylglutamate semialdehyde into succinylglutamate. This Pseudomonas savastanoi pv. phaseolicola (strain 1448A / Race 6) (Pseudomonas syringae pv. phaseolicola (strain 1448A / Race 6)) protein is N-succinylglutamate 5-semialdehyde dehydrogenase.